A 167-amino-acid polypeptide reads, in one-letter code: UPF0336 protein MAP_4109 (167 aa).

The MaoC-like domain maps to 21–124 (GREQLRQFAL…RFGADIVVTK (104 aa)).

The protein belongs to the UPF0336 family.

This Mycolicibacterium paratuberculosis (strain ATCC BAA-968 / K-10) (Mycobacterium paratuberculosis) protein is UPF0336 protein MAP_4109.